A 202-amino-acid polypeptide reads, in one-letter code: Holliday junction branch migration complex subunit RuvA (202 aa).

The domain I stretch occupies residues 1–62 (MIGYLRGRLH…EDAMELYGFT (62 aa)). A domain II region spans residues 63-141 (RPEELHLFTL…KSGLVDGTET (79 aa)). Positions 141-145 (TEAIP) are flexible linker. The segment at 146–202 (AGGGDNDEALAALLALGYSREEIGPILARVRQELGNAAPTTAVLQAVLKTFGRGGGD) is domain III.

The protein belongs to the RuvA family. In terms of assembly, homotetramer. Forms an RuvA(8)-RuvB(12)-Holliday junction (HJ) complex. HJ DNA is sandwiched between 2 RuvA tetramers; dsDNA enters through RuvA and exits via RuvB. An RuvB hexamer assembles on each DNA strand where it exits the tetramer. Each RuvB hexamer is contacted by two RuvA subunits (via domain III) on 2 adjacent RuvB subunits; this complex drives branch migration. In the full resolvosome a probable DNA-RuvA(4)-RuvB(12)-RuvC(2) complex forms which resolves the HJ.

The protein localises to the cytoplasm. The RuvA-RuvB-RuvC complex processes Holliday junction (HJ) DNA during genetic recombination and DNA repair, while the RuvA-RuvB complex plays an important role in the rescue of blocked DNA replication forks via replication fork reversal (RFR). RuvA specifically binds to HJ cruciform DNA, conferring on it an open structure. The RuvB hexamer acts as an ATP-dependent pump, pulling dsDNA into and through the RuvAB complex. HJ branch migration allows RuvC to scan DNA until it finds its consensus sequence, where it cleaves and resolves the cruciform DNA. The polypeptide is Holliday junction branch migration complex subunit RuvA (Moorella thermoacetica (strain ATCC 39073 / JCM 9320)).